A 501-amino-acid polypeptide reads, in one-letter code: Lysine--tRNA ligase (501 aa).

Glutamate 412 and glutamate 419 together coordinate Mg(2+).

Belongs to the class-II aminoacyl-tRNA synthetase family. As to quaternary structure, homodimer. Requires Mg(2+) as cofactor.

The protein localises to the cytoplasm. The catalysed reaction is tRNA(Lys) + L-lysine + ATP = L-lysyl-tRNA(Lys) + AMP + diphosphate. This chain is Lysine--tRNA ligase (lysS), found in Pasteurella multocida (strain Pm70).